Reading from the N-terminus, the 353-residue chain is UPF0421 protein YgaE (353 aa).

The next 4 membrane-spanning stretches (helical) occupy residues Leu20 to Ile40, Val67 to Ile87, Leu103 to Ile123, and Thr125 to Pro145.

Belongs to the UPF0421 family.

It is found in the cell membrane. The sequence is that of UPF0421 protein YgaE (ygaE) from Bacillus subtilis (strain 168).